The following is a 427-amino-acid chain: UPF0229 protein YeaH (427 aa).

Residues 79–90 (NDHFVQNDRIER) show a composition bias toward basic and acidic residues. Residues 79-110 (NDHFVQNDRIERPQGGGGGSGSGQGQASQDGE) form a disordered region. Positions 92–102 (QGGGGGSGSGQ) are enriched in gly residues.

It belongs to the UPF0229 family.

The chain is UPF0229 protein YeaH from Escherichia coli O139:H28 (strain E24377A / ETEC).